Consider the following 236-residue polypeptide: Ribonuclease 3 (236 aa).

In terms of domain architecture, RNase III spans 13 to 138 (TEKVFKISGY…LIGAIYVDGG (126 aa)). Position 51 (Glu-51) interacts with Mg(2+). Asp-55 is an active-site residue. 2 residues coordinate Mg(2+): Asn-124 and Glu-127. The active site involves Glu-127. Residues 164–232 (DAKTALQEWA…AKLMLEKVTK (69 aa)) enclose the DRBM domain.

It belongs to the ribonuclease III family. As to quaternary structure, homodimer. Requires Mg(2+) as cofactor.

It localises to the cytoplasm. It catalyses the reaction Endonucleolytic cleavage to 5'-phosphomonoester.. In terms of biological role, digests double-stranded RNA. Involved in the processing of primary rRNA transcript to yield the immediate precursors to the large and small rRNAs (23S and 16S). Processes some mRNAs, and tRNAs when they are encoded in the rRNA operon. Processes pre-crRNA and tracrRNA of type II CRISPR loci if present in the organism. This chain is Ribonuclease 3, found in Anaplasma phagocytophilum (strain HZ).